We begin with the raw amino-acid sequence, 389 residues long: Shewanella-like protein phosphatase 1 (389 aa).

The transit peptide at 1–53 directs the protein to the chloroplast; that stretch reads MASLYLNSLLPLPPSHPQKLLEPSSSSLLSTSNGNELALKPIVINGDPPTFVS. Mn(2+)-binding residues include Asp-64, His-66, Asp-102, and Asn-137. The Proton donor role is filled by His-138. Mn(2+) contacts are provided by His-242 and His-314.

Belongs to the metallophosphoesterase superfamily. SLP family. Requires Mn(2+) as cofactor. Expressed in rosettes leaves, shoots and flowers (at protein level).

Its subcellular location is the plastid. The protein localises to the chloroplast. Shows phosphatase activity, hydrolyzing the artificial substrate para-nitrophenylphosphate (pNPP) in vitro. The chain is Shewanella-like protein phosphatase 1 from Arabidopsis thaliana (Mouse-ear cress).